We begin with the raw amino-acid sequence, 256 residues long: Deoxyribose-phosphate aldolase (256 aa).

Asp-102 functions as the Proton donor/acceptor in the catalytic mechanism. The Schiff-base intermediate with acetaldehyde role is filled by Lys-165. Residue Lys-197 is the Proton donor/acceptor of the active site.

The protein belongs to the DeoC/FbaB aldolase family. DeoC type 2 subfamily.

The protein resides in the cytoplasm. It carries out the reaction 2-deoxy-D-ribose 5-phosphate = D-glyceraldehyde 3-phosphate + acetaldehyde. It functions in the pathway carbohydrate degradation; 2-deoxy-D-ribose 1-phosphate degradation; D-glyceraldehyde 3-phosphate and acetaldehyde from 2-deoxy-alpha-D-ribose 1-phosphate: step 2/2. In terms of biological role, catalyzes a reversible aldol reaction between acetaldehyde and D-glyceraldehyde 3-phosphate to generate 2-deoxy-D-ribose 5-phosphate. This Shewanella sp. (strain ANA-3) protein is Deoxyribose-phosphate aldolase.